We begin with the raw amino-acid sequence, 764 residues long: Probable 5-methyltetrahydropteroyltriglutamate--homocysteine methyltransferase (764 aa).

5-methyltetrahydropteroyltri-L-glutamate is bound by residues Lys-19 and Asn-126. At Ser-182 the chain carries Phosphoserine. Thr-441 carries the post-translational modification Phosphothreonine. L-homocysteine-binding positions include 442 to 444 (IGS) and Glu-495. L-methionine-binding positions include 442 to 444 (IGS) and Glu-495. Residues Asp-500, Tyr-523, 526 to 527 (RC), and Trp-572 contribute to the 5-methyltetrahydropteroyltri-L-glutamate site. Asp-610 contacts L-homocysteine. L-methionine is bound at residue Asp-610. Positions 652, 654, and 676 each coordinate Zn(2+). Residue His-703 is the Proton donor of the active site. Cys-735 serves as a coordination point for Zn(2+).

This sequence belongs to the vitamin-B12 independent methionine synthase family. Requires Zn(2+) as cofactor.

The protein localises to the nucleus. It localises to the cytoplasm. The catalysed reaction is 5-methyltetrahydropteroyltri-L-glutamate + L-homocysteine = tetrahydropteroyltri-L-glutamate + L-methionine. It functions in the pathway amino-acid biosynthesis; L-methionine biosynthesis via de novo pathway; L-methionine from L-homocysteine (MetE route): step 1/1. In terms of biological role, catalyzes the transfer of a methyl group from 5-methyltetrahydrofolate to homocysteine resulting in methionine formation. This is Probable 5-methyltetrahydropteroyltriglutamate--homocysteine methyltransferase (met26) from Schizosaccharomyces pombe (strain 972 / ATCC 24843) (Fission yeast).